The chain runs to 71 residues: Conotoxin Ca5.1 (71 aa).

A signal peptide spans 1 to 19; that stretch reads MRCVPVFIILLLLASPAAS. Positions 20-56 are excised as a propeptide; it reads DPLEKRIQSDLIRAALEDADTKNDPRILEDIVSTALA.

The protein belongs to the conotoxin T superfamily. Post-translationally, contains 2 disulfide bonds that can be either 'C1-C3, C2-C4' or 'C1-C4, C2-C3', since these disulfide connectivities have been observed for conotoxins with cysteine framework V (for examples, see AC P0DQQ7 and AC P81755). In terms of tissue distribution, expressed by the venom duct.

Its subcellular location is the secreted. The chain is Conotoxin Ca5.1 from Conus caracteristicus (Characteristic cone).